Consider the following 653-residue polypeptide: Macrolide export ATP-binding/permease protein MacB (653 aa).

The 239-residue stretch at 6–244 folds into the ABC transporter domain; sequence LQLTRVTRRF…DAASGASGDA (239 aa). Residue 42–49 participates in ATP binding; it reads GASGSGKS. 4 consecutive transmembrane segments (helical) span residues 278–298, 526–546, 587–607, and 616–636; these read LLTMLGIIIGITSVVSIVAIG, LTLLLSLIAVISLVVGGIGVM, MGGAIGIVLSLGMSFVFSLFV, and AGSIVSAFLCSTLIGVVFGFM.

This sequence belongs to the ABC transporter superfamily. Macrolide exporter (TC 3.A.1.122) family. As to quaternary structure, homodimer.

The protein localises to the cell inner membrane. Functionally, non-canonical ABC transporter that contains transmembrane domains (TMD), which form a pore in the inner membrane, and an ATP-binding domain (NBD), which is responsible for energy generation. Confers resistance against macrolides. The chain is Macrolide export ATP-binding/permease protein MacB from Burkholderia thailandensis (strain ATCC 700388 / DSM 13276 / CCUG 48851 / CIP 106301 / E264).